The chain runs to 21 residues: Nigrocin-2HSa (21 aa).

Cys15 and Cys21 are joined by a disulfide.

In terms of tissue distribution, expressed by the skin glands.

It localises to the secreted. Has antibacterial activity against the Gram-positive bacterium S.aureus ATCC 25923 (MIC=56 uM) and the Gram-negative bacterium E.coli ATCC 25726 (MIC=28 uM). The polypeptide is Nigrocin-2HSa (Odorrana hosii (Hose's rock frog)).